A 402-amino-acid chain; its full sequence is Palmitoyltransferase PFA4 (402 aa).

The Cytoplasmic portion of the chain corresponds to 1–8 (MAVQLKWP). Residues 9 to 29 (IIGVVIPCVLIAMVAYGSHYF) traverse the membrane as a helical segment. Topologically, residues 30-39 (VFRTNLSRTE) are lumenal. Residues 40 to 60 (QILYEVYVCIVWLSYYLAIVV) traverse the membrane as a helical segment. Over 61–125 (DPGSPPKNFT…GHNNLPHFLR (65 aa)) the chain is Cytoplasmic. The region spanning 78–128 (RWCKKCQNYKPERSHHCKTCNKCVLKMDHHCPWTYNCVGHNNLPHFLRFVF) is the DHHC domain. Catalysis depends on Cys108, which acts as the S-palmitoyl cysteine intermediate. The helical transmembrane segment at 126-146 (FVFFLIVGMTYVLFQLGKQVL) threads the bilayer. The Lumenal segment spans residues 147 to 165 (HYYDSSKLPSYLIDKKEMC). Residues 166-186 (AVIFLLPVTFFVFVSIIILFV) traverse the membrane as a helical segment. At 187–402 (RCMINLLFRG…LVSKDEISNN (216 aa)) the chain is on the cytoplasmic side.

Belongs to the DHHC palmitoyltransferase family. PFA4 subfamily.

It is found in the endoplasmic reticulum membrane. It carries out the reaction L-cysteinyl-[protein] + hexadecanoyl-CoA = S-hexadecanoyl-L-cysteinyl-[protein] + CoA. Functionally, mediates the reversible addition of palmitate to target proteins, thereby regulating their membrane association and biological function. The polypeptide is Palmitoyltransferase PFA4 (Debaryomyces hansenii (strain ATCC 36239 / CBS 767 / BCRC 21394 / JCM 1990 / NBRC 0083 / IGC 2968) (Yeast)).